The following is a 122-amino-acid chain: Large ribosomal subunit protein bL12 (122 aa).

The protein belongs to the bacterial ribosomal protein bL12 family. In terms of assembly, homodimer. Part of the ribosomal stalk of the 50S ribosomal subunit. Forms a multimeric L10(L12)X complex, where L10 forms an elongated spine to which 2 to 4 L12 dimers bind in a sequential fashion. Binds GTP-bound translation factors.

Its function is as follows. Forms part of the ribosomal stalk which helps the ribosome interact with GTP-bound translation factors. Is thus essential for accurate translation. The protein is Large ribosomal subunit protein bL12 of Streptococcus mutans serotype c (strain ATCC 700610 / UA159).